A 392-amino-acid polypeptide reads, in one-letter code: F-box/kelch-repeat protein At4g39550 (392 aa).

Positions 1-12 (MSSPEKKRKTTK) are enriched in basic residues. The interval 1–27 (MSSPEKKRKTTKKPSPTPQSTTPNPSL) is disordered. A compositionally biased stretch (low complexity) spans 18-27 (PQSTTPNPSL). The F-box domain maps to 21–67 (TTPNPSLPDDLVVSCLARVSRLYYPTLSLVSKSFRSLIASPDLYKTR). Kelch repeat units follow at residues 148-194 (NIYN…VVEG), 195-242 (KIYV…KSAV), and 244-285 (EGEI…VVEN).

As to quaternary structure, part of a SCF (ASK-cullin-F-box) protein ligase complex. Interacts with ASK13 and ASK14.

It functions in the pathway protein modification; protein ubiquitination. Functionally, component of SCF(ASK-cullin-F-box) E3 ubiquitin ligase complexes, which may mediate the ubiquitination and subsequent proteasomal degradation of target proteins. The sequence is that of F-box/kelch-repeat protein At4g39550 from Arabidopsis thaliana (Mouse-ear cress).